The primary structure comprises 414 residues: Transmembrane protein 184A (414 aa).

The disordered stretch occupies residues Met-1–Ser-32. 7 helical membrane-spanning segments follow: residues Val-48–Leu-68, Leu-83–Gly-103, Phe-120–Met-140, Leu-177–Gly-197, Leu-211–Phe-231, Phe-248–Leu-268, and Val-290–Leu-310. 2 disordered regions span residues Thr-323 to Glu-342 and Tyr-364 to Leu-414. A compositionally biased stretch (polar residues) spans Ser-379–His-388.

Belongs to the TMEM184 family. In terms of tissue distribution, expressed in vascular cells (at protein level).

Its subcellular location is the cell membrane. It localises to the cytoplasm. The protein localises to the perinuclear region. The protein resides in the cytoplasmic vesicle membrane. It is found in the early endosome membrane. Its subcellular location is the endosome. It localises to the cytoplasmic vesicle. The protein localises to the secretory vesicle membrane. Functionally, acts as a heparin receptor in vascular cells. May be involved in vesicle transport in exocrine cells and Sertoli cells. In Bos taurus (Bovine), this protein is Transmembrane protein 184A (TMEM184A).